The sequence spans 96 residues: Small ribosomal subunit protein bS16m (96 aa).

This sequence belongs to the bacterial ribosomal protein bS16 family. In terms of assembly, component of the mitochondrial small ribosomal subunit (mt-SSU). Mature yeast 74S mitochondrial ribosomes consist of a small (37S) and a large (54S) subunit. The 37S small subunit contains a 15S ribosomal RNA (15S mt-rRNA) and at least 32 different proteins. The 54S large subunit contains a 21S rRNA (21S mt-rRNA) and at least 45 different proteins.

The protein resides in the mitochondrion. Its function is as follows. Component of the mitochondrial ribosome (mitoribosome), a dedicated translation machinery responsible for the synthesis of mitochondrial genome-encoded proteins, including at least some of the essential transmembrane subunits of the mitochondrial respiratory chain. The mitoribosomes are attached to the mitochondrial inner membrane and translation products are cotranslationally integrated into the membrane. In Schizosaccharomyces pombe (strain 972 / ATCC 24843) (Fission yeast), this protein is Small ribosomal subunit protein bS16m (mrps16).